The sequence spans 1008 residues: Pheromone-regulated membrane protein 10 (1008 aa).

Disordered stretches follow at residues 1–273 (MSQS…TFLG), 342–384 (KLPE…FYTP), and 477–506 (KNDFKNGPKRMANKIPGRKHGAQKQDTQDE). Low complexity predominate over residues 70–85 (DTIISNASTTNNSSSD). Residues 95–111 (GENSNLPNFNFSANQVH) are compositionally biased toward polar residues. Acidic residues-rich tracts occupy residues 116–132 (ANEDDANDDSGEEEDTF) and 143–161 (GSDEDMEADNEGDNVEDKE). Over residues 162–186 (EVVNEKEEIADDLHSKSSKTSRESK) the composition is skewed to basic and acidic residues. A compositionally biased stretch (polar residues) spans 188 to 204 (FNAGTKNSRRSLNSLQR). The segment covering 205-214 (NETDVTDQLK) has biased composition (basic and acidic residues). Low complexity predominate over residues 215–225 (RTTSTTSSSKR). A compositionally biased stretch (basic and acidic residues) spans 226-239 (SNSDKRTGFKDILR). Over residues 346–364 (GTSSDQQLDYSDTSASNLI) the composition is skewed to polar residues. Over residues 483 to 498 (GPKRMANKIPGRKHGA) the composition is skewed to basic residues. The next 10 helical transmembrane spans lie at 683 to 703 (SPWLCVFLYGLGSSMVCPFAF), 707 to 727 (WYDVPIAFGVGLCVGYLQFFV), 736 to 756 (SVFEVTASIVVTFIARAIGSI), 762 to 782 (FCFSAIAQGSLALILPGYIIL), 800 to 820 (MFYAIIYSLFLGFGITLGASL), 838 to 858 (IKQDEFKILFVPLFSACLGLI), 866 to 886 (LPIMIVIACAGYVGTFFAGKH), 892 to 912 (VTEFTACIGAFIVGILGNLYS), 917 to 937 (GMAVAAMLPAIFVQVPSGIAS), and 978 to 998 (VKVSIGISVGLFASALFVYPF).

The protein belongs to the ThrE exporter (TC 2.A.79) family.

The protein localises to the membrane. This chain is Pheromone-regulated membrane protein 10, found in Debaryomyces hansenii (strain ATCC 36239 / CBS 767 / BCRC 21394 / JCM 1990 / NBRC 0083 / IGC 2968) (Yeast).